A 603-amino-acid chain; its full sequence is DNA mismatch repair protein MutL (603 aa).

The protein belongs to the DNA mismatch repair MutL/HexB family.

In terms of biological role, this protein is involved in the repair of mismatches in DNA. It is required for dam-dependent methyl-directed DNA mismatch repair. May act as a 'molecular matchmaker', a protein that promotes the formation of a stable complex between two or more DNA-binding proteins in an ATP-dependent manner without itself being part of a final effector complex. This Bradyrhizobium diazoefficiens (strain JCM 10833 / BCRC 13528 / IAM 13628 / NBRC 14792 / USDA 110) protein is DNA mismatch repair protein MutL.